We begin with the raw amino-acid sequence, 406 residues long: CRISP/Allergen/PR-1 (406 aa).

An N-terminal signal peptide occupies residues 1 to 18 (MHFQVILMMMWLWLEAEG). A glycan (N-linked (GlcNAc...) asparagine) is linked at asparagine 39. In terms of domain architecture, SCP spans 58 to 205 (LREHNKLRSR…TFKDLYTCNY (148 aa)).

This sequence belongs to the CRISP family. In terms of processing, contains 9 disulfide bonds. As to expression, expressed by the venom gland.

The protein localises to the secreted. The chain is CRISP/Allergen/PR-1 from Trittame loki (Brush-footed trapdoor spider).